The primary structure comprises 156 residues: Cyanate hydratase (156 aa).

Catalysis depends on residues Arg96, Glu99, and Ser122.

Belongs to the cyanase family.

It carries out the reaction cyanate + hydrogencarbonate + 3 H(+) = NH4(+) + 2 CO2. Catalyzes the reaction of cyanate with bicarbonate to produce ammonia and carbon dioxide. The sequence is that of Cyanate hydratase from Serratia proteamaculans (strain 568).